Consider the following 736-residue polypeptide: 1,4-alpha-glucan branching enzyme GlgB (736 aa).

Residue Asp-417 is the Nucleophile of the active site. The active-site Proton donor is Glu-470.

It belongs to the glycosyl hydrolase 13 family. GlgB subfamily. Monomer.

The enzyme catalyses Transfers a segment of a (1-&gt;4)-alpha-D-glucan chain to a primary hydroxy group in a similar glucan chain.. It participates in glycan biosynthesis; glycogen biosynthesis. Catalyzes the formation of the alpha-1,6-glucosidic linkages in glycogen by scission of a 1,4-alpha-linked oligosaccharide from growing alpha-1,4-glucan chains and the subsequent attachment of the oligosaccharide to the alpha-1,6 position. This chain is 1,4-alpha-glucan branching enzyme GlgB, found in Pseudomonas putida (strain ATCC 47054 / DSM 6125 / CFBP 8728 / NCIMB 11950 / KT2440).